Consider the following 97-residue polypeptide: Small ribosomal subunit protein bS6 (97 aa).

Belongs to the bacterial ribosomal protein bS6 family.

Functionally, binds together with bS18 to 16S ribosomal RNA. The chain is Small ribosomal subunit protein bS6 from Listeria monocytogenes serotype 4b (strain CLIP80459).